The chain runs to 364 residues: UDP-N-acetylglucosamine--N-acetylmuramyl-(pentapeptide) pyrophosphoryl-undecaprenol N-acetylglucosamine transferase (364 aa).

UDP-N-acetyl-alpha-D-glucosamine-binding positions include 10-12 (TGG), Asn124, Ser195, Ile250, and Gln295.

The protein belongs to the glycosyltransferase 28 family. MurG subfamily.

It localises to the cell membrane. The catalysed reaction is di-trans,octa-cis-undecaprenyl diphospho-N-acetyl-alpha-D-muramoyl-L-alanyl-D-glutamyl-meso-2,6-diaminopimeloyl-D-alanyl-D-alanine + UDP-N-acetyl-alpha-D-glucosamine = di-trans,octa-cis-undecaprenyl diphospho-[N-acetyl-alpha-D-glucosaminyl-(1-&gt;4)]-N-acetyl-alpha-D-muramoyl-L-alanyl-D-glutamyl-meso-2,6-diaminopimeloyl-D-alanyl-D-alanine + UDP + H(+). The protein operates within cell wall biogenesis; peptidoglycan biosynthesis. Cell wall formation. Catalyzes the transfer of a GlcNAc subunit on undecaprenyl-pyrophosphoryl-MurNAc-pentapeptide (lipid intermediate I) to form undecaprenyl-pyrophosphoryl-MurNAc-(pentapeptide)GlcNAc (lipid intermediate II). The chain is UDP-N-acetylglucosamine--N-acetylmuramyl-(pentapeptide) pyrophosphoryl-undecaprenol N-acetylglucosamine transferase from Bacillus cytotoxicus (strain DSM 22905 / CIP 110041 / 391-98 / NVH 391-98).